Consider the following 308-residue polypeptide: Ribosomal RNA small subunit methyltransferase H (308 aa).

S-adenosyl-L-methionine-binding positions include 34 to 36 (GGH), aspartate 54, phenylalanine 85, aspartate 99, and glutamine 106.

This sequence belongs to the methyltransferase superfamily. RsmH family.

It localises to the cytoplasm. The enzyme catalyses cytidine(1402) in 16S rRNA + S-adenosyl-L-methionine = N(4)-methylcytidine(1402) in 16S rRNA + S-adenosyl-L-homocysteine + H(+). Functionally, specifically methylates the N4 position of cytidine in position 1402 (C1402) of 16S rRNA. The sequence is that of Ribosomal RNA small subunit methyltransferase H from Dichelobacter nodosus (strain VCS1703A).